The sequence spans 501 residues: Probable cytosol aminopeptidase (501 aa).

2 residues coordinate Mn(2+): Lys257 and Asp262. Lys269 is an active-site residue. 3 residues coordinate Mn(2+): Asp281, Asp341, and Glu343. The active site involves Arg345.

The protein belongs to the peptidase M17 family. Mn(2+) serves as cofactor.

It localises to the cytoplasm. It catalyses the reaction Release of an N-terminal amino acid, Xaa-|-Yaa-, in which Xaa is preferably Leu, but may be other amino acids including Pro although not Arg or Lys, and Yaa may be Pro. Amino acid amides and methyl esters are also readily hydrolyzed, but rates on arylamides are exceedingly low.. The catalysed reaction is Release of an N-terminal amino acid, preferentially leucine, but not glutamic or aspartic acids.. Functionally, presumably involved in the processing and regular turnover of intracellular proteins. Catalyzes the removal of unsubstituted N-terminal amino acids from various peptides. The polypeptide is Probable cytosol aminopeptidase (Synechococcus sp. (strain RCC307)).